The chain runs to 491 residues: MRVSEPSDVVIRSDDTCHIHLTWSGSERRSAAKQHARKVAMKLGVSSGLIYLVGQPTVNWGDSDQPQPFRQRRYFYYLSGIDEPDCYLTYDIQADLLTLYVPDFDLRRAVWMGPTLTIEEAHKQSDVDRVNFFAALQHDLEWWTTKNKGTRPIYVLHDSQQPLIPSKRLWLDNERLLPAMNAARVIKDEYELRMIRQANYISGLAHRKILEDIHRMSTEAEIESSFLATCVSHGAKNQSYAIIAGSGENAAVLHYVKNNEPLDGRQLVCLDAGAEWRCYASDVTRTIPLWTDWPSERARNIYRVVEEMQEECIRRIRKGVRFRDLQLLAHDIAIKGLQKLDILTNDCTSAIYESGASAVFFPHGLGHHVGLEVHDVSKRPITALDGNQANWGNHNFVPLLTDSSWSVPLLDEGMVVTIEPGIYFNRLALLNAQNQPLAKYINFDEAEKYIPIGGVRIEDDILVTAKGYENLTTAPKGEEMLEIIRRGIDNS.

The Mn(2+) site is built by D271, D282, E419, and E458.

The protein belongs to the peptidase M24B family. Requires Mn(2+) as cofactor.

The catalysed reaction is Release of any N-terminal amino acid, including proline, that is linked to proline, even from a dipeptide or tripeptide.. Functionally, catalyzes the removal of a penultimate prolyl residue from the N-termini of peptides. The chain is Probable Xaa-Pro aminopeptidase AFLA_084750 from Aspergillus flavus (strain ATCC 200026 / FGSC A1120 / IAM 13836 / NRRL 3357 / JCM 12722 / SRRC 167).